Here is a 207-residue protein sequence, read N- to C-terminus: Ras-related protein Rab-7a (207 aa).

The residue at position 2 (Thr-2) is an N-acetylthreonine. Ser-17, Gly-18, Val-19, Gly-20, Lys-21, Thr-22, Ser-23, Ser-34, Asn-35, Tyr-37, and Thr-40 together coordinate GTP. Thr-22 serves as a coordination point for Mg(2+). A Switch 1 motif is present at residues 28–41 (YVNKKFSNQYKATI). Residues Thr-40 and Asp-63 each coordinate Mg(2+). Residue Gly-66 participates in GTP binding. The Switch 2 motif lies at 67–82 (QERFQSLGVAFYRGAD). Ser-72 is modified (phosphoserine). Asn-125, Lys-126, Asp-128, Ala-156, and Lys-157 together coordinate GTP. Glycyl lysine isopeptide (Lys-Gly) (interchain with G-Cter in ubiquitin) cross-links involve residues Lys-191 and Lys-194. 2 S-geranylgeranyl cysteine lipidation sites follow: Cys-205 and Cys-207. Cys-207 is modified (cysteine methyl ester).

Belongs to the small GTPase superfamily. Rab family. Interacts with NTRK1/TRKA. Interacts with RILP. Interacts with PSMA7. Interacts with RNF115. Interacts with FYCO1. Interacts with the PIK3C3/VPS34-PIK3R4 complex. The GTP-bound form interacts with OSBPL1A. The GTP-bound form interacts with RAC1. Interacts with CLN3. Interacts with CHM, the substrate-binding subunit of the Rab geranylgeranyltransferase complex. Interacts with C9orf72. Does not interact with HPS4 and the BLOC-3 complex (heterodimer of HPS1 and HPS4). Interacts with CLN5. Interacts with PLEKHM1 (via N- and C-terminus). Interacts with PRPH; the interaction is direct. Interacts with VPS13A. The GDP-bound form interacts with RIMOC1. Interacts with the MON1A-CCZ1B complex and this interaction is enhanced in the presence of RIMOC1. Interacts with VPS39 and VPS41. Forms a ternary complex with LAMP2 and RUFY4; the interaction with LAMP2 is mediated by RUFY4 (via RUN and coiled coil domains). The cofactor is Mg(2+). Post-translationally, deubiquitination at Lys-191 and Lys-194 by USP32. In terms of processing, phosphorylated at Ser-72 by LRRK1; phosphorylation is dependent on protein kinase C (PKC) activation of LRRK1. Prenylated. Prenylation is required for association with cellular membranes.

The protein localises to the cytoplasmic vesicle. Its subcellular location is the phagosome membrane. The protein resides in the late endosome membrane. It localises to the lysosome membrane. It is found in the melanosome membrane. The protein localises to the autophagosome membrane. Its subcellular location is the lipid droplet. The protein resides in the endosome membrane. It localises to the mitochondrion membrane. It carries out the reaction GTP + H2O = GDP + phosphate + H(+). With respect to regulation, regulated by guanine nucleotide exchange factors (GEFs) which promote the exchange of bound GDP for free GTP. Regulated by GTPase activating proteins (GAPs) which increase the GTP hydrolysis activity. Inhibited by GDP dissociation inhibitors (GDIs). Its function is as follows. The small GTPases Rab are key regulators of intracellular membrane trafficking, from the formation of transport vesicles to their fusion with membranes. Rabs cycle between an inactive GDP-bound form and an active GTP-bound form that is able to recruit to membranes different sets of downstream effectors directly responsible for vesicle formation, movement, tethering and fusion. In its active state, RAB7A binds to a variety of effector proteins playing a key role in the regulation of endo-lysosomal trafficking. Governs early-to-late endosomal maturation, microtubule minus-end as well as plus-end directed endosomal migration and positioning, and endosome-lysosome transport through different protein-protein interaction cascades. Also plays a central role in growth-factor-mediated cell signaling, nutrient-transporter-mediated nutrient uptake, neurotrophin transport in the axons of neurons and lipid metabolism. Also involved in regulation of some specialized endosomal membrane trafficking, such as maturation of melanosomes, pathogen-induced phagosomes (or vacuoles) and autophagosomes. Plays a role in the maturation and acidification of phagosomes that engulf pathogens, such as S.aureus and Mycobacteria. Plays a role in the fusion of phagosomes with lysosomes. In concert with RAC1, plays a role in regulating the formation of RBs (ruffled borders) in osteoclasts. Controls the endosomal trafficking and neurite outgrowth signaling of NTRK1/TRKA. Regulates the endocytic trafficking of the EGF-EGFR complex by regulating its lysosomal degradation. Involved in the ADRB2-stimulated lipolysis through lipophagy, a cytosolic lipase-independent autophagic pathway. Required for the exosomal release of SDCBP, CD63 and syndecan. Required for vesicular trafficking and cell surface expression of ACE2. May play a role in PRPH neuronal intermediate filament assembly. This chain is Ras-related protein Rab-7a (RAB7A), found in Pongo abelii (Sumatran orangutan).